A 455-amino-acid chain; its full sequence is Golgi pH regulator (455 aa).

4 helical membrane-spanning segments follow: residues 46-66, 79-99, 111-131, and 150-170; these read ITFAFSCTMFELIIFEILGAL, LYVILLVLIFVVPFYIGYFVV, LFACVVWFTFMYFFWKLGDPF, and VGVIGVTLMALLSGFGAVNCP. 2 N-linked (GlcNAc...) asparagine glycosylation sites follow: Asn180 and Asn243. Transmembrane regions (helical) follow at residues 290–310, 343–363, 378–398, and 425–445; these read GYFFSIYCVWKIFMATINIVF, ISFILVGIIIVTSIRGLLITL, VIVLVLAQIMGMYFVSSVLLM, and WFDVIFLVSALSSILFLYLAH.

The protein belongs to the Golgi pH regulator (TC 1.A.38) family. In terms of assembly, homotrimer.

The protein resides in the golgi apparatus membrane. The catalysed reaction is iodide(out) = iodide(in). It catalyses the reaction chloride(in) = chloride(out). It carries out the reaction bromide(in) = bromide(out). The enzyme catalyses fluoride(in) = fluoride(out). In terms of biological role, voltage-gated channel that enables the transfer of anions such as iodide, chloride, bromide and fluoride which may function in counter-ion conductance and participates in Golgi acidification. This Salmo salar (Atlantic salmon) protein is Golgi pH regulator.